Consider the following 288-residue polypeptide: Undecaprenyl-diphosphatase (288 aa).

8 helical membrane passes run 25–45, 53–73, 93–113, 121–141, 171–191, 196–216, 231–251, and 263–283; these read GITE…NEFL, FIDM…MVIY, WKLW…GLLL, LSNF…FIWI, VLSI…GIIV, SVAA…YSGL, GQAA…LFVI, and FTVF…YGAV.

It belongs to the UppP family.

It is found in the cell membrane. It carries out the reaction di-trans,octa-cis-undecaprenyl diphosphate + H2O = di-trans,octa-cis-undecaprenyl phosphate + phosphate + H(+). Its function is as follows. Catalyzes the dephosphorylation of undecaprenyl diphosphate (UPP). Confers resistance to bacitracin. In Streptococcus thermophilus (strain ATCC BAA-250 / LMG 18311), this protein is Undecaprenyl-diphosphatase.